A 498-amino-acid polypeptide reads, in one-letter code: Protein flp (498 aa).

4 helical membrane passes run 6-26, 389-409, 433-453, and 471-491; these read LYFLSISIIILVAISIAIYIT, FNIVTVLMTTLILLAFIFSAY, LTLCLCIAIALILYALPYLIL, and LALITTLIALFSTLIVILLFL.

It localises to the cell membrane. In terms of biological role, its precise function is unknown. Has no penicillin-binding activity and is not involved in methicillin resistance. The protein is Protein flp (flp) of Staphylococcus aureus (strain Mu50 / ATCC 700699).